Reading from the N-terminus, the 965-residue chain is Glycine dehydrogenase (decarboxylating) 1 (965 aa).

Position 713 is an N6-(pyridoxal phosphate)lysine (lysine 713).

It belongs to the GcvP family. In terms of assembly, the glycine cleavage system is composed of four proteins: P, T, L and H. Pyridoxal 5'-phosphate serves as cofactor.

It catalyses the reaction N(6)-[(R)-lipoyl]-L-lysyl-[glycine-cleavage complex H protein] + glycine + H(+) = N(6)-[(R)-S(8)-aminomethyldihydrolipoyl]-L-lysyl-[glycine-cleavage complex H protein] + CO2. In terms of biological role, the glycine cleavage system catalyzes the degradation of glycine. The P protein binds the alpha-amino group of glycine through its pyridoxal phosphate cofactor; CO(2) is released and the remaining methylamine moiety is then transferred to the lipoamide cofactor of the H protein. This chain is Glycine dehydrogenase (decarboxylating) 1, found in Colwellia psychrerythraea (strain 34H / ATCC BAA-681) (Vibrio psychroerythus).